The primary structure comprises 37 residues: Large ribosomal subunit protein bL36c (37 aa).

Belongs to the bacterial ribosomal protein bL36 family.

The protein localises to the plastid. It is found in the chloroplast. The polypeptide is Large ribosomal subunit protein bL36c (rpl36) (Cyanidium caldarium (Red alga)).